The primary structure comprises 189 residues: Putative manganese efflux pump MntP (189 aa).

Helical transmembrane passes span 3–23, 41–61, 62–82, 104–124, 132–152, and 168–188; these read PVATLFLAFAMSTDAFAAAIG, LIFGVIEALTPLVGWFLGKAA, AQYVSAWDHWIAFSLLLVLGA, FWLLALTGFATSIDAMAVGAG, IYSTAAAIGLATMAMVTIGVM, and AGGIVLIGIGSTILAEHLNIF.

The protein belongs to the MntP (TC 9.B.29) family.

The protein resides in the cell inner membrane. Functionally, probably functions as a manganese efflux pump. This is Putative manganese efflux pump MntP from Paraburkholderia phytofirmans (strain DSM 17436 / LMG 22146 / PsJN) (Burkholderia phytofirmans).